Consider the following 327-residue polypeptide: Methionyl-tRNA formyltransferase (327 aa).

121–124 contributes to the (6S)-5,6,7,8-tetrahydrofolate binding site; the sequence is SLLP.

Belongs to the Fmt family.

It carries out the reaction L-methionyl-tRNA(fMet) + (6R)-10-formyltetrahydrofolate = N-formyl-L-methionyl-tRNA(fMet) + (6S)-5,6,7,8-tetrahydrofolate + H(+). In terms of biological role, attaches a formyl group to the free amino group of methionyl-tRNA(fMet). The formyl group appears to play a dual role in the initiator identity of N-formylmethionyl-tRNA by promoting its recognition by IF2 and preventing the misappropriation of this tRNA by the elongation apparatus. The protein is Methionyl-tRNA formyltransferase of Burkholderia pseudomallei (strain 1710b).